Here is a 160-residue protein sequence, read N- to C-terminus: Large ribosomal subunit protein eL21 (160 aa).

2 stretches are compositionally biased toward basic and acidic residues: residues 112–123 (NDQKKKEAKEKG) and 136–145 (REAHFVRTNG). Residues 112–145 (NDQKKKEAKEKGTWVQLKRQPAPPREAHFVRTNG) are disordered.

It belongs to the eukaryotic ribosomal protein eL21 family. Component of the large ribosomal subunit.

Its subcellular location is the cytoplasm. The protein resides in the cytosol. It is found in the endoplasmic reticulum. Its function is as follows. Component of the large ribosomal subunit. The ribosome is a large ribonucleoprotein complex responsible for the synthesis of proteins in the cell. The polypeptide is Large ribosomal subunit protein eL21 (RPL21) (Capra hircus (Goat)).